Reading from the N-terminus, the 290-residue chain is Prepilin leader peptidase/N-methyltransferase (290 aa).

The helical transmembrane segment at 13 to 33 threads the bilayer; it reads AFVLCTILLGLLVGSFLNVVV. Positions 72, 75, 97, and 100 each coordinate Zn(2+). Helical transmembrane passes span 128-148, 158-178, 183-203, 228-248, and 261-276; these read FTWQAGAMLLLTWGLLAMSLI, VLVLPLLWLGLIANHFGLFAS, LFGAVFGYLSLWSVFWLFKLV, ILPLTILLSSLVGAILGVIML, and FGPYLAIAGWIALLWG.

This sequence belongs to the peptidase A24 family. Zn(2+) serves as cofactor.

The protein resides in the cell inner membrane. It carries out the reaction Typically cleaves a -Gly-|-Phe- bond to release an N-terminal, basic peptide of 5-8 residues from type IV prepilin, and then N-methylates the new N-terminal amino group, the methyl donor being S-adenosyl-L-methionine.. Plays an essential role in type IV pili and type II pseudopili formation by proteolytically removing the leader sequence from substrate proteins and subsequently monomethylating the alpha-amino group of the newly exposed N-terminal phenylalanine. Substrates include proteins required for pilus biogenesis PilE, PilV, PilW, and PilX as well as some components of the type II general secretory apparatus GspG, GspH, GspI and GspJ. The sequence is that of Prepilin leader peptidase/N-methyltransferase (pilD) from Pseudomonas aeruginosa (strain ATCC 15692 / DSM 22644 / CIP 104116 / JCM 14847 / LMG 12228 / 1C / PRS 101 / PAO1).